We begin with the raw amino-acid sequence, 415 residues long: MRYDHIEEGDPEIFELMRRESLRQNRTLDLIASENLASEAVLEATGSIFTNKYAEGYPNARYYGGCEVADQVEILAIERAKKLFDADHANVQPHSGSQANQAVYLAFLKPGDTILSMSLAAGGHLSHGAPVSMTGKWFNIVHYGVDPKTETIDLNEVEKLALEHKPKLIIAGASAYPRFIDFQGFREIADKVGAIFMVDMAHIAGLVAAGVHPSPVPFADVVTTTTHKTLRGPRGGLILCKAEHAKAIDKAVFPGVQGGPLVHIIAAKAVAFKEDSEPSFKEYSAQVVKNAKTMAETFASKGVRVVTGGTDNHLMLLDVTSVGLTGKEAEELLAEVGIVVNKNAIPFDKLPPRVASGIRIGTPNITTRGLRDEECKLLAEQMSELFITKSEKVKAEIKGLVQELTERYPAYKGWS.

(6S)-5,6,7,8-tetrahydrofolate contacts are provided by residues L119 and 123-125; that span reads GHL. K228 is subject to N6-(pyridoxal phosphate)lysine.

The protein belongs to the SHMT family. As to quaternary structure, homodimer. The cofactor is pyridoxal 5'-phosphate.

The protein localises to the cytoplasm. The enzyme catalyses (6R)-5,10-methylene-5,6,7,8-tetrahydrofolate + glycine + H2O = (6S)-5,6,7,8-tetrahydrofolate + L-serine. It participates in one-carbon metabolism; tetrahydrofolate interconversion. Its pathway is amino-acid biosynthesis; glycine biosynthesis; glycine from L-serine: step 1/1. Catalyzes the reversible interconversion of serine and glycine with tetrahydrofolate (THF) serving as the one-carbon carrier. This reaction serves as the major source of one-carbon groups required for the biosynthesis of purines, thymidylate, methionine, and other important biomolecules. Also exhibits THF-independent aldolase activity toward beta-hydroxyamino acids, producing glycine and aldehydes, via a retro-aldol mechanism. The sequence is that of Serine hydroxymethyltransferase from Coprothermobacter proteolyticus (strain ATCC 35245 / DSM 5265 / OCM 4 / BT).